We begin with the raw amino-acid sequence, 286 residues long: Phosphoribosylaminoimidazole-succinocarboxamide synthase (286 aa).

The protein belongs to the SAICAR synthetase family.

The catalysed reaction is 5-amino-1-(5-phospho-D-ribosyl)imidazole-4-carboxylate + L-aspartate + ATP = (2S)-2-[5-amino-1-(5-phospho-beta-D-ribosyl)imidazole-4-carboxamido]succinate + ADP + phosphate + 2 H(+). It functions in the pathway purine metabolism; IMP biosynthesis via de novo pathway; 5-amino-1-(5-phospho-D-ribosyl)imidazole-4-carboxamide from 5-amino-1-(5-phospho-D-ribosyl)imidazole-4-carboxylate: step 1/2. The sequence is that of Phosphoribosylaminoimidazole-succinocarboxamide synthase from Histophilus somni (strain 2336) (Haemophilus somnus).